Reading from the N-terminus, the 46-residue chain is Denclatoxin-B (46 aa).

3 disulfide bridges follow: C3–C40, C4–C32, and C16–C26.

This sequence belongs to the plant thionin (TC 1.C.44) family.

The protein resides in the secreted. Functionally, thionins are small plant proteins which are toxic to animal cells. They seem to exert their toxic effect at the level of the cell membrane. Their precise function is not known. This chain is Denclatoxin-B, found in Dendrophthora clavata (Columbian mistletoe).